The following is a 471-amino-acid chain: MQQEATGGQKIRPIPIIASFLMAGFIGLFSETALNMALSDLIQVFDISSATVQWLTTGYLLTLGILVPISGLLLQWFTTRGLFFTAVSFSIAGTLIAALSPTFAMLMIGRVVQAVGTALLLPLMFNTILLIFPEHKRGSAMGMIGLVIMFAPAVGPTISGLILENLTWNWIFWISLPFLIIALLFGMKFMQNVSVVTKPKIDILSIILSTLGFGGVVFAFSSAGENGWGSATVLVSIIVGGIALGLFVWRQLTMEKPLMDLKVFKYPMFTLGLILVFISFMMILSTMILLPLYLQNSLALAAFSAGLVLLPGGVLNGLMSPFTGRLFDAYGPRALVIPGFIVAVIALFFLTRIEVGTSALTIIVLHSVLMIGISMVMMPAQTNGLNQLPPKLYPDGTAIMNTLQQVSGAIGTAVAITIMSAGQKAYMETAQGVGPEQMIASLTAGIQNAFVFGLIMACIGLLCSLFIRKAK.

The next 13 membrane-spanning stretches (helical) occupy residues 15–34, 55–77, 82–104, 111–131, 141–163, 170–187, 202–224, 231–253, 268–290, 297–319, 329–351, 358–380, and 445–467; these read PIIASFLMAGFIGLFSETAL, LTTGYLLTLGILVPISGLLLQWF, LFFTAVSFSIAGTLIAALSPTFA, VVQAVGTALLLPLMFNTILLI, MGMIGLVIMFAPAVGPTISGLIL, WIFWISLPFLIIALLFGM, DILSIILSTLGFGGVVFAFSSAG, ATVLVSIIVGGIALGLFVWRQLT, MFTLGLILVFISFMMILSTMILL, SLALAAFSAGLVLLPGGVLNGLM, AYGPRALVIPGFIVAVIALFFLT, SALTIIVLHSVLMIGISMVMMPA, and GIQNAFVFGLIMACIGLLCSLFI.

This sequence belongs to the major facilitator superfamily. EmrB family.

The protein localises to the cell membrane. Proton-dependent transporter. May mediate the efflux of lincomycin. This is Lincomycin resistance protein LmrB (lmrB) from Listeria innocua serovar 6a (strain ATCC BAA-680 / CLIP 11262).